Reading from the N-terminus, the 811-residue chain is Leucine--tRNA ligase (811 aa).

The short motif at 38–49 is the 'HIGH' region element; that stretch reads SYPSGSNLHAGH. Positions 570–574 match the 'KMSKS' region motif; sequence KMSKS. ATP is bound at residue lysine 573.

The protein belongs to the class-I aminoacyl-tRNA synthetase family.

The protein localises to the cytoplasm. The enzyme catalyses tRNA(Leu) + L-leucine + ATP = L-leucyl-tRNA(Leu) + AMP + diphosphate. The polypeptide is Leucine--tRNA ligase (Clostridium kluyveri (strain ATCC 8527 / DSM 555 / NBRC 12016 / NCIMB 10680 / K1)).